Reading from the N-terminus, the 120-residue chain is Ribonuclease P protein component (120 aa).

The protein belongs to the RnpA family. Consists of a catalytic RNA component (M1 or rnpB) and a protein subunit.

The enzyme catalyses Endonucleolytic cleavage of RNA, removing 5'-extranucleotides from tRNA precursor.. In terms of biological role, RNaseP catalyzes the removal of the 5'-leader sequence from pre-tRNA to produce the mature 5'-terminus. It can also cleave other RNA substrates such as 4.5S RNA. The protein component plays an auxiliary but essential role in vivo by binding to the 5'-leader sequence and broadening the substrate specificity of the ribozyme. This is Ribonuclease P protein component from Acidothermus cellulolyticus (strain ATCC 43068 / DSM 8971 / 11B).